We begin with the raw amino-acid sequence, 262 residues long: Abhydrolase domain-containing protein ACTT2 (262 aa).

The short motif at 260-262 (SKL) is the Peroxisomal targeting signal type 1 element.

Belongs to the AB hydrolase superfamily. AKT2 hydrolase family.

Its subcellular location is the peroxisome. The protein operates within mycotoxin biosynthesis. Abhydrolase domain-containing protein; part of the gene clusters that mediate the biosynthesis of the host-selective toxins (HSTs) ACT-toxins responsible for brown spot of tangerine disease by the tangerine pathotype which affects tangerines and mandarins. ACT-toxins consist of three moieties, 9,10-epoxy-8-hydroxy-9-methyl-decatrienoic acid (EDA), valine and a polyketide. ACT-toxin I is toxic to both citrus and pear; toxin II the 5''-deoxy derivative of ACT-toxin I, is highly toxic to pear and slightly toxic to citrus. On cellular level, ACT-toxins affect plasma membrane of susceptible cells and cause a sudden increase in loss of K(+) after a few minutes of toxin treatment. The acyl-CoA ligase ACTT1, the hydrolase ACTT2, the enoyl-CoA hydratases ACTT3 and ACTT6, and the acyl-CoA synthetase ACTT5 are all involved in the biosynthesis of the AK-, AF- and ACT-toxin common 9,10-epoxy-8-hydroxy-9-methyl-decatrienoic acid (EDA) structural moiety. The exact role of each enzyme, and of additional enzymes identified within the AF-toxin clusters have still to be determined. On the other hand, ACTTS1 to ACTTS4 are specific to the tangerine pathotype. The function of ACTTS3 is to elongate the polyketide chain portion of ACT-toxin that is unique to this toxin. The enoyl-reductase ACTTS2 might complement the missing enoyl-reductase (ER) domain in ACTTS3 in the synthesis of the polyketide portion of ACT-toxin. The roles of the nonribosomal peptide synthetases-related proteins ACTTS1 and ACTTS4 have also still not been elucidated. The polypeptide is Abhydrolase domain-containing protein ACTT2 (Alternaria alternata (Alternaria rot fungus)).